The chain runs to 369 residues: Anhydro-N-acetylmuramic acid kinase (369 aa).

12–19 is a binding site for ATP; the sequence is GTSMDGVD.

Belongs to the anhydro-N-acetylmuramic acid kinase family.

The catalysed reaction is 1,6-anhydro-N-acetyl-beta-muramate + ATP + H2O = N-acetyl-D-muramate 6-phosphate + ADP + H(+). It functions in the pathway amino-sugar metabolism; 1,6-anhydro-N-acetylmuramate degradation. Its pathway is cell wall biogenesis; peptidoglycan recycling. Its function is as follows. Catalyzes the specific phosphorylation of 1,6-anhydro-N-acetylmuramic acid (anhMurNAc) with the simultaneous cleavage of the 1,6-anhydro ring, generating MurNAc-6-P. Is required for the utilization of anhMurNAc either imported from the medium or derived from its own cell wall murein, and thus plays a role in cell wall recycling. The sequence is that of Anhydro-N-acetylmuramic acid kinase from Shewanella sp. (strain W3-18-1).